The sequence spans 245 residues: Adenosylcobinamide-GDP ribazoletransferase (245 aa).

The next 6 helical transmembrane spans lie at 35–55 (WFPL…ALGL), 108–128 (IGAF…IGAH), 137–157 (GVLI…AALV), 176–196 (IAIG…TPVM), 197–217 (TTVT…HLAR), and 222–242 (INGD…LLAA).

Belongs to the CobS family. It depends on Mg(2+) as a cofactor.

Its subcellular location is the cell inner membrane. The catalysed reaction is alpha-ribazole + adenosylcob(III)inamide-GDP = adenosylcob(III)alamin + GMP + H(+). It catalyses the reaction alpha-ribazole 5'-phosphate + adenosylcob(III)inamide-GDP = adenosylcob(III)alamin 5'-phosphate + GMP + H(+). It functions in the pathway cofactor biosynthesis; adenosylcobalamin biosynthesis; adenosylcobalamin from cob(II)yrinate a,c-diamide: step 7/7. Joins adenosylcobinamide-GDP and alpha-ribazole to generate adenosylcobalamin (Ado-cobalamin). Also synthesizes adenosylcobalamin 5'-phosphate from adenosylcobinamide-GDP and alpha-ribazole 5'-phosphate. The polypeptide is Adenosylcobinamide-GDP ribazoletransferase (Nitratidesulfovibrio vulgaris (strain DP4) (Desulfovibrio vulgaris)).